We begin with the raw amino-acid sequence, 134 residues long: Acyl carrier protein SF2, chloroplastic (134 aa).

The transit peptide at 1–51 (MSTTFCSSVSMQATSLAATTRISFQKPALVSTTNLSFNLRRSIPTRFSISC) directs the protein to the chloroplast. In terms of domain architecture, Carrier spans 55 to 130 (PETVEKVSKI…EAAELIEELV (76 aa)). Residue Ser90 is modified to O-(pantetheine 4'-phosphoryl)serine.

Belongs to the acyl carrier protein (ACP) family. In terms of processing, 4'-phosphopantetheine is transferred from CoA to a specific serine of apo-ACP by acpS. This modification is essential for activity because fatty acids are bound in thioester linkage to the sulfhydryl of the prosthetic group.

The protein localises to the plastid. Its subcellular location is the chloroplast. Its pathway is lipid metabolism; fatty acid biosynthesis. Its function is as follows. Carrier of the growing fatty acid chain in fatty acid biosynthesis. The polypeptide is Acyl carrier protein SF2, chloroplastic (Acl1.1) (Brassica campestris (Field mustard)).